A 135-amino-acid chain; its full sequence is Large ribosomal subunit protein uL16c (135 aa).

The protein belongs to the universal ribosomal protein uL16 family. In terms of assembly, part of the 50S ribosomal subunit.

It is found in the plastid. The protein localises to the chloroplast. The sequence is that of Large ribosomal subunit protein uL16c from Olimarabidopsis pumila (Dwarf rocket).